The primary structure comprises 520 residues: UDP-N-acetylmuramoyl-L-alanyl-D-glutamate--2,6-diaminopimelate ligase (520 aa).

Residue L48 coordinates UDP-N-acetyl-alpha-D-muramoyl-L-alanyl-D-glutamate. 134 to 140 (GTSGKTT) is a binding site for ATP. Residues 176-177 (TT), S203, and R211 each bind UDP-N-acetyl-alpha-D-muramoyl-L-alanyl-D-glutamate. Residue K243 is modified to N6-carboxylysine. Residues R405, 429-432 (DNPR), G483, and E487 contribute to the meso-2,6-diaminopimelate site. Positions 429–432 (DNPR) match the Meso-diaminopimelate recognition motif motif.

This sequence belongs to the MurCDEF family. MurE subfamily. Requires Mg(2+) as cofactor. Carboxylation is probably crucial for Mg(2+) binding and, consequently, for the gamma-phosphate positioning of ATP.

Its subcellular location is the cytoplasm. It catalyses the reaction UDP-N-acetyl-alpha-D-muramoyl-L-alanyl-D-glutamate + meso-2,6-diaminopimelate + ATP = UDP-N-acetyl-alpha-D-muramoyl-L-alanyl-gamma-D-glutamyl-meso-2,6-diaminopimelate + ADP + phosphate + H(+). The protein operates within cell wall biogenesis; peptidoglycan biosynthesis. Its function is as follows. Catalyzes the addition of meso-diaminopimelic acid to the nucleotide precursor UDP-N-acetylmuramoyl-L-alanyl-D-glutamate (UMAG) in the biosynthesis of bacterial cell-wall peptidoglycan. The chain is UDP-N-acetylmuramoyl-L-alanyl-D-glutamate--2,6-diaminopimelate ligase from Mycolicibacterium paratuberculosis (strain ATCC BAA-968 / K-10) (Mycobacterium paratuberculosis).